Here is an 862-residue protein sequence, read N- to C-terminus: uncharacterized protein (862 aa).

Disordered stretches follow at residues 45–91 (HPPV…PDEV), 633–824 (RAEQ…GDDD), and 837–862 (GGSG…LLLS). 2 stretches are compositionally biased toward acidic residues: residues 57 to 69 (MDVD…EKDE) and 78 to 91 (PEVE…PDEV). Basic and acidic residues-rich tracts occupy residues 633-650 (RAEQ…DAAK), 657-686 (REAE…KAEK), and 694-703 (TKKEKTEKKT). The segment covering 751 to 760 (EKKKRTAAKK) has biased composition (basic residues). The span at 761–779 (KTVDRPSGHRPSSKKEYRS) shows a compositional bias: basic and acidic residues.

This is an uncharacterized protein from Ictaluridae (bullhead catfishes).